The following is a 132-amino-acid chain: Replication enhancer protein (132 aa).

This sequence belongs to the geminiviridae replication enhancer protein family. In terms of assembly, homooligomer. Interacts with the replication-associated protein (REP). Interacts with host proliferating cell nuclear antigen (PCNA). Interacts with host retinoblastoma-related protein 1 (RBR1), and may thereby deregulate the host cell cycle. Oligomerization and interaction with PCNA are necessary for optimal replication enhancement.

Increases viral DNA accumulation. Enhances infectivity and symptom expression. The polypeptide is Replication enhancer protein (Pepper huasteco yellow vein virus (PHYVV)).